Reading from the N-terminus, the 176-residue chain is Large ribosomal subunit protein uL10 (176 aa).

The protein belongs to the universal ribosomal protein uL10 family. As to quaternary structure, part of the ribosomal stalk of the 50S ribosomal subunit. The N-terminus interacts with L11 and the large rRNA to form the base of the stalk. The C-terminus forms an elongated spine to which L12 dimers bind in a sequential fashion forming a multimeric L10(L12)X complex.

In terms of biological role, forms part of the ribosomal stalk, playing a central role in the interaction of the ribosome with GTP-bound translation factors. This chain is Large ribosomal subunit protein uL10, found in Natranaerobius thermophilus (strain ATCC BAA-1301 / DSM 18059 / JW/NM-WN-LF).